The primary structure comprises 166 residues: MKVYITYGTADFLKTIVQKHPSENILLMQGQENAILIHETNGDTVFQAPHAYEVIDQVGEIKHPGFAVLNNIAVTQEGRPLFENRFKNRAGKVENEPGFEAIRVLRPLDSDTYVILTLWETESAFQDWQQSGSYKEAHKKRDTSAGIDTTSIFSRPSYVTTYFAVE.

Asparagine 33 is a binding site for Fe cation. Residues 66 to 153 (FAVLNNIAVT…SAGIDTTSIF (88 aa)) form the ABM domain. Heme is bound at residue histidine 138.

Belongs to the antibiotic biosynthesis monooxygenase family. Homodimer.

Its subcellular location is the cytoplasm. It carries out the reaction heme b + 3 reduced [NADPH--hemoprotein reductase] + 3 O2 = biliverdin IXalpha + CO + Fe(2+) + 3 oxidized [NADPH--hemoprotein reductase] + 3 H2O + H(+). Its function is as follows. Catalyzes the oxidative degradation of the heme macrocyclic porphyrin ring in the presence of a suitable electron donor such as ascorbate or NADPH--cytochrome P450 reductase, with subsequent release of free iron. The protein is Heme-degrading monooxygenase HmoB (hmoB) of Bacillus subtilis (strain 168).